Here is a 167-residue protein sequence, read N- to C-terminus: CS6 fimbrial subunit B (167 aa).

Positions 1 to 21 are cleaved as a signal peptide; sequence MLKKIISAIALIAGTSGVVNA.

Its subcellular location is the fimbrium. This chain is CS6 fimbrial subunit B (cssB), found in Escherichia coli.